Reading from the N-terminus, the 100-residue chain is Large ribosomal subunit protein uL23 (100 aa).

It belongs to the universal ribosomal protein uL23 family. As to quaternary structure, part of the 50S ribosomal subunit. Contacts protein L29, and trigger factor when it is bound to the ribosome.

One of the early assembly proteins it binds 23S rRNA. One of the proteins that surrounds the polypeptide exit tunnel on the outside of the ribosome. Forms the main docking site for trigger factor binding to the ribosome. This chain is Large ribosomal subunit protein uL23, found in Shigella dysenteriae serotype 1 (strain Sd197).